A 221-amino-acid chain; its full sequence is MAIIFALVARGTVVLSEFSATSTNASSISKQILEKLPGNDSDSHMSYSQDRYIFHVKRTDGLTVLCMADETAGRNIPFAFLDDIHQRFVKTYGRAIHSAQAYSMNDEFSRVLSQQMEFYSNDPNADRMSRIKGEMSQVRNVMIENIDKVLDRGERLELLVDKTENMQGNTFRFRKQARRYRTIMWWRNVKLTIALILVLALVVYIAMAFVCHGPSLPSCFK.

Residue alanine 2 is modified to N-acetylalanine. Residues 2-190 lie on the Cytoplasmic side of the membrane; that stretch reads AIIFALVARG…RTIMWWRNVK (189 aa). The 106-residue stretch at 7–112 folds into the Longin domain; the sequence is LVARGTVVLS…SMNDEFSRVL (106 aa). The v-SNARE coiled-coil homology domain maps to 127 to 187; sequence RMSRIKGEMS…RRYRTIMWWR (61 aa). The helical; Anchor for type IV membrane protein transmembrane segment at 191–211 threads the bilayer; the sequence is LTIALILVLALVVYIAMAFVC. Residues 212-221 are Vesicular-facing; sequence HGPSLPSCFK.

This sequence belongs to the synaptobrevin family. In terms of assembly, interacts with subunits of the vacuole protein sorting (HOPS) complex including VPS11, VCL1, VPS18, VPS33, VPS39 and VPS41. As to expression, highly expressed in stems and roots. Detected in flowers and leaves.

Its subcellular location is the vacuole membrane. The protein resides in the prevacuolar compartment membrane. Functionally, involved in the targeting and/or fusion of transport vesicles to their target membrane. This Arabidopsis thaliana (Mouse-ear cress) protein is Vesicle-associated membrane protein 713.